The primary structure comprises 260 residues: Ribosomal RNA small subunit methyltransferase G (260 aa).

Residues 1 to 45 (MKQRGPAGGRSSSPKPSAPGSGAGEGPDGRSAPASQKINKASAND) are disordered. Residues 9 to 20 (GRSSSPKPSAPG) are compositionally biased toward low complexity. The segment covering 33 to 45 (PASQKINKASAND) has biased composition (polar residues). S-adenosyl-L-methionine-binding residues include glycine 123, phenylalanine 128, and arginine 193.

Belongs to the methyltransferase superfamily. RNA methyltransferase RsmG family.

The protein localises to the cytoplasm. It carries out the reaction guanosine(527) in 16S rRNA + S-adenosyl-L-methionine = N(7)-methylguanosine(527) in 16S rRNA + S-adenosyl-L-homocysteine. Specifically methylates the N7 position of guanine in position 527 of 16S rRNA. In Bradyrhizobium diazoefficiens (strain JCM 10833 / BCRC 13528 / IAM 13628 / NBRC 14792 / USDA 110), this protein is Ribosomal RNA small subunit methyltransferase G.